We begin with the raw amino-acid sequence, 379 residues long: Quinolinate synthase (379 aa).

2 residues coordinate iminosuccinate: histidine 60 and serine 81. Cysteine 126 provides a ligand contact to [4Fe-4S] cluster. Residues tyrosine 152–asparagine 154 and serine 169 contribute to the iminosuccinate site. Cysteine 213 contacts [4Fe-4S] cluster. Iminosuccinate is bound by residues histidine 239–glutamate 241 and threonine 256. Cysteine 310 lines the [4Fe-4S] cluster pocket.

This sequence belongs to the quinolinate synthase family. Type 1 subfamily. The cofactor is [4Fe-4S] cluster.

It localises to the cytoplasm. It catalyses the reaction iminosuccinate + dihydroxyacetone phosphate = quinolinate + phosphate + 2 H2O + H(+). It functions in the pathway cofactor biosynthesis; NAD(+) biosynthesis; quinolinate from iminoaspartate: step 1/1. Functionally, catalyzes the condensation of iminoaspartate with dihydroxyacetone phosphate to form quinolinate. This Herminiimonas arsenicoxydans protein is Quinolinate synthase.